The primary structure comprises 199 residues: Large ribosomal subunit protein uL10 (199 aa).

Belongs to the universal ribosomal protein uL10 family. As to quaternary structure, part of the ribosomal stalk of the 50S ribosomal subunit. The N-terminus interacts with L11 and the large rRNA to form the base of the stalk. The C-terminus forms an elongated spine to which L12 dimers bind in a sequential fashion forming a multimeric L10(L12)X complex.

Its function is as follows. Forms part of the ribosomal stalk, playing a central role in the interaction of the ribosome with GTP-bound translation factors. This is Large ribosomal subunit protein uL10 (rplJ) from Aquifex aeolicus (strain VF5).